Here is an 859-residue protein sequence, read N- to C-terminus: Probable potassium transporter 14 (859 aa).

The segment covering 1–19 has biased composition (gly residues); sequence METRSGGSGSASGGGGGGR. A disordered region spans residues 1–69; sequence METRSGGSGS…SRGGCSDSDD (69 aa). The Cytoplasmic segment spans residues 1 to 112; the sequence is METRSGGSGS…RHQEITVGRS (112 aa). Positions 54 to 65 are enriched in low complexity; the sequence is PAAASGSRGGCS. The helical transmembrane segment at 113-133 threads the bilayer; it reads IVLAVQTLGVVFGDVGTSPLY. At 134–155 the chain is on the extracellular side; that stretch reads AFDVMFNKYPITSKEDVLGALS. The chain crosses the membrane as a helical span at residues 156–176; the sequence is LVIYTLILIPLLKYTLIALWG. Over 177-240 the chain is Cytoplasmic; it reads NDDGEGGTFA…RLETSSMLKK (64 aa). Residues 241 to 261 traverse the membrane as a helical segment; the sequence is LLLMLVLFGTSMVIADGVVTP. Residues 262 to 275 lie on the Extracellular side of the membrane; the sequence is AMSVMSAVNGLKVG. A helical transmembrane segment spans residues 276-296; it reads ISSVNEGEVVMITVAVLIVLF. Residues 297–305 are Cytoplasmic-facing; that stretch reads TLQRFGSSK. The chain crosses the membrane as a helical span at residues 306 to 326; that stretch reads VALAVGPALFIWFCCLAGIGI. At 327–359 the chain is on the extracellular side; that stretch reads YNMKTYGSAVLQAFNPMYIYYYFERNPTQAWMS. A helical transmembrane segment spans residues 360 to 380; sequence LGGCLLCATGSEAMFADLCYF. Over 381–388 the chain is Cytoplasmic; sequence SVKSVQLT. The helical transmembrane segment at 389-409 threads the bilayer; that stretch reads FVFLVLPCLLLGYLGQAAFLM. Over 410–417 the chain is Extracellular; it reads ENLTENQQ. Asn411 carries N-linked (GlcNAc...) asparagine glycosylation. Residues 418–438 form a helical membrane-spanning segment; the sequence is VFFLSIPNQAFWPVVFIAILA. Residues 439–478 lie on the Cytoplasmic side of the membrane; sequence AIIASRTMTTAIFSTIKQATALGCFPRLKIIHTSRSFMGQ. A helical transmembrane segment spans residues 479–499; it reads IYIPMMNWFLLVSCLAFVTMF. The Extracellular segment spans residues 500 to 508; that stretch reads GSINEIGNA. Residues 509–531 traverse the membrane as a helical segment; the sequence is YGIAELGVMMMTTVLVTIIMLLI. Residues 532 to 535 lie on the Cytoplasmic side of the membrane; sequence WQIN. The chain crosses the membrane as a helical span at residues 536–558; the sequence is IIVVLCFLTLSLGLELIFFSSVL. Residues 559 to 560 are Extracellular-facing; it reads GS. Residues 561–581 traverse the membrane as a helical segment; sequence VADGSWVLLVFAAVLYLIMYI. The Cytoplasmic portion of the chain corresponds to 582–859; it reads WNYGTKLKYE…MMQVAMQYMV (278 aa). The segment at 752 to 772 is disordered; it reads GVPPAEAAGTTEHPTIGSSMS. Polar residues predominate over residues 763 to 772; it reads EHPTIGSSMS.

It belongs to the HAK/KUP transporter (TC 2.A.72.3) family.

It localises to the membrane. Its function is as follows. High-affinity potassium transporter. The protein is Probable potassium transporter 14 (HAK14) of Oryza sativa subsp. japonica (Rice).